A 292-amino-acid polypeptide reads, in one-letter code: 4-hydroxy-tetrahydrodipicolinate synthase (292 aa).

Threonine 45 serves as a coordination point for pyruvate. Tyrosine 133 (proton donor/acceptor) is an active-site residue. Lysine 161 functions as the Schiff-base intermediate with substrate in the catalytic mechanism. Residue isoleucine 203 coordinates pyruvate.

This sequence belongs to the DapA family. As to quaternary structure, homotetramer; dimer of dimers.

The protein localises to the cytoplasm. The catalysed reaction is L-aspartate 4-semialdehyde + pyruvate = (2S,4S)-4-hydroxy-2,3,4,5-tetrahydrodipicolinate + H2O + H(+). It participates in amino-acid biosynthesis; L-lysine biosynthesis via DAP pathway; (S)-tetrahydrodipicolinate from L-aspartate: step 3/4. Functionally, catalyzes the condensation of (S)-aspartate-beta-semialdehyde [(S)-ASA] and pyruvate to 4-hydroxy-tetrahydrodipicolinate (HTPA). The polypeptide is 4-hydroxy-tetrahydrodipicolinate synthase (Dechloromonas aromatica (strain RCB)).